A 143-amino-acid polypeptide reads, in one-letter code: MRGTMTRVMATGTFDILHPGHLLYLERSRALGDELVVVVARDINVKHKPRPVVPEDQRLRMVSALKMVDMAVLGSVTDIFEPVRALRPDIITLGYDQYMDENWLEGELRKRGLMARVVRISEREPCELCSSRQIVEKILKERC.

ATP is bound by residues 13–14 (TF), 18–21 (HPGH), and Asp-96.

The protein belongs to the archaeal FAD synthase family. Homodimer. A divalent metal cation is required as a cofactor.

It carries out the reaction FMN + ATP + H(+) = FAD + diphosphate. It functions in the pathway cofactor biosynthesis; FAD biosynthesis; FAD from FMN: step 1/1. In terms of biological role, catalyzes the transfer of the AMP portion of ATP to flavin mononucleotide (FMN) to produce flavin adenine dinucleotide (FAD) coenzyme. The polypeptide is FAD synthase (Methanothrix thermoacetophila (strain DSM 6194 / JCM 14653 / NBRC 101360 / PT) (Methanosaeta thermophila)).